A 359-amino-acid polypeptide reads, in one-letter code: Proton-coupled zinc antiporter SLC30A2 (359 aa).

Residues 1–56 (MASRSFFGALWKSEASRIPPVNLPSVELAVQSNHYCHAQKDSGSHPNSEKQRARRK) are Cytoplasmic-facing. Positions 34 to 37 (HYCH) match the Mitochondrial localization signal motif. C36 is a binding site for Zn(2+). The helical transmembrane segment at 57–77 (LYVASAICLVFMIGEIIGGYL) threads the bilayer. Residues 78–86 (AQSLAIMTD) lie on the Lumenal side of the membrane. A helical transmembrane segment spans residues 87-107 (AAHLLTDFASMLISLFSLWVS). H89 and D93 together coordinate Zn(2+). Over 108–123 (SRPATKTMNFGWQRAE) the chain is Cytoplasmic. The chain crosses the membrane as a helical span at residues 124–144 (ILGALLSVLSIWVVTGVLVYL). Residues 145 to 159 (AVQRLISGDYEIKGD) lie on the Lumenal side of the membrane. The helical transmembrane segment at 160 to 180 (TMLITSGCAVAVNIIMGLALH) threads the bilayer. At 181–207 (QSGHGHSHGHSHEDSSQQQQNPSVRAA) the chain is on the cytoplasmic side. The helical transmembrane segment at 208–228 (FIHVVGDLLQSVGVLVAAYII) threads the bilayer. Residues H210 and D214 each coordinate Zn(2+). The Lumenal portion of the chain corresponds to 229–236 (YFKPEYKY). A helical transmembrane segment spans residues 237–257 (VDPICTFLFSILVLGTTLTIL). Topologically, residues 258 to 291 (RDVILVLMEGTPKGVDFTTVKNLLLSVDGVEALH) are cytoplasmic. Residues 281–282 (LL) carry the Lysosomal targeting motif motif. S283 bears the Phosphoserine mark. 3 residues coordinate Zn(2+): H291, H308, and E342. A helical transmembrane segment spans residues 292 to 312 (SLHIWALTVAQPVLSVHIAIA). Residues 313-359 (QNVDAQAVLKVARDRLQGKFNFHTMTIQIESYSEDMKSCQECQGPSE) lie on the Lumenal side of the membrane.

Belongs to the cation diffusion facilitator (CDF) transporter (TC 2.A.4) family. SLC30A subfamily. As to quaternary structure, homodimer. Interacts (via lysosomal targeting motif) with AP3D1; in AP-3-mediated transport to lysosomes. Interacts with TMEM163. Post-translationally, phosphorylated at Ser-283. Phosphorylation at Ser-283 prevents localization to lysosomes. Dephosphorylation of Ser-283 which triggers localization to lysosomes, accumulation of zinc into lysosomes and lysosomal-mediated cell death is induced by TNF-alpha. Detected in intestine, kidney, seminal vesicles and testis.

It localises to the cytoplasmic vesicle. It is found in the secretory vesicle membrane. The protein resides in the zymogen granule membrane. The protein localises to the endosome membrane. Its subcellular location is the lysosome membrane. It localises to the mitochondrion inner membrane. The catalysed reaction is Zn(2+)(in) + 2 H(+)(out) = Zn(2+)(out) + 2 H(+)(in). Its function is as follows. Electroneutral proton-coupled antiporter concentrating zinc ions into a variety of intracellular organelles including endosomes, zymogen granules and mitochondria. Thereby, plays a crucial role in cellular zinc homeostasis to confer upon cells protection against its potential cytotoxicity. Regulates the zinc concentration of milk, through the transport of zinc ions into secretory vesicles of mammary cells. By concentrating zinc ions into lysosomes participates to lysosomal-mediated cell death during early mammary gland involution. This is Proton-coupled zinc antiporter SLC30A2 from Rattus norvegicus (Rat).